The primary structure comprises 124 residues: Small ribosomal subunit protein uS12 (124 aa).

The residue at position 89 (D89) is a 3-methylthioaspartic acid. Residues 105–124 are disordered; the sequence is AGVKDRKKGRSKYGAKRPKA. The span at 109-124 shows a compositional bias: basic residues; sequence DRKKGRSKYGAKRPKA.

This sequence belongs to the universal ribosomal protein uS12 family. As to quaternary structure, part of the 30S ribosomal subunit. Contacts proteins S8 and S17. May interact with IF1 in the 30S initiation complex.

With S4 and S5 plays an important role in translational accuracy. In terms of biological role, interacts with and stabilizes bases of the 16S rRNA that are involved in tRNA selection in the A site and with the mRNA backbone. Located at the interface of the 30S and 50S subunits, it traverses the body of the 30S subunit contacting proteins on the other side and probably holding the rRNA structure together. The combined cluster of proteins S8, S12 and S17 appears to hold together the shoulder and platform of the 30S subunit. This is Small ribosomal subunit protein uS12 from Dichelobacter nodosus (strain VCS1703A).